We begin with the raw amino-acid sequence, 237 residues long: LexA repressor (237 aa).

The segment at residues 26-46 (FDEMKEALDLRSKSGIHRLIT) is a DNA-binding region (H-T-H motif). Residues Ser158 and Lys196 each act as for autocatalytic cleavage activity in the active site.

The protein belongs to the peptidase S24 family. In terms of assembly, homodimer.

The enzyme catalyses Hydrolysis of Ala-|-Gly bond in repressor LexA.. Represses a number of genes involved in the response to DNA damage (SOS response), including recA and lexA. In the presence of single-stranded DNA, RecA interacts with LexA causing an autocatalytic cleavage which disrupts the DNA-binding part of LexA, leading to derepression of the SOS regulon and eventually DNA repair. This Xanthobacter autotrophicus (strain ATCC BAA-1158 / Py2) protein is LexA repressor.